Consider the following 408-residue polypeptide: Imidazolonepropionase (408 aa).

His-73 and His-75 together coordinate Fe(3+). Residues His-73 and His-75 each coordinate Zn(2+). 3 residues coordinate 4-imidazolone-5-propanoate: Arg-82, Tyr-145, and His-178. Residue Tyr-145 participates in N-formimidoyl-L-glutamate binding. His-243 contacts Fe(3+). His-243 contributes to the Zn(2+) binding site. Gln-246 serves as a coordination point for 4-imidazolone-5-propanoate. A Fe(3+)-binding site is contributed by Asp-318. Asp-318 is a binding site for Zn(2+). Positions 320 and 322 each coordinate N-formimidoyl-L-glutamate. Ser-323 contributes to the 4-imidazolone-5-propanoate binding site.

It belongs to the metallo-dependent hydrolases superfamily. HutI family. It depends on Zn(2+) as a cofactor. Fe(3+) is required as a cofactor.

It is found in the cytoplasm. The enzyme catalyses 4-imidazolone-5-propanoate + H2O = N-formimidoyl-L-glutamate. It functions in the pathway amino-acid degradation; L-histidine degradation into L-glutamate; N-formimidoyl-L-glutamate from L-histidine: step 3/3. In terms of biological role, catalyzes the hydrolytic cleavage of the carbon-nitrogen bond in imidazolone-5-propanoate to yield N-formimidoyl-L-glutamate. It is the third step in the universal histidine degradation pathway. This is Imidazolonepropionase from Shewanella halifaxensis (strain HAW-EB4).